We begin with the raw amino-acid sequence, 2260 residues long: Reducing polyketide synthase pksF (2260 aa).

One can recognise a Ketosynthase family 3 (KS3) domain in the interval 20-445 (VEPIAIVGFG…GTNAHVVLDD (426 aa)). Catalysis depends on for beta-ketoacyl synthase activity residues Cys-194, His-329, and His-368. Positions 598 to 933 (FVFTGQGAQW…ECAGKLHTIG (336 aa)) are malonyl-CoA:ACP transacylase (MAT) domain. The For malonyltransferase activity role is filled by Ser-689. The N-terminal hotdog fold stretch occupies residues 984–1121 (HELLGSRTPD…GYVAIEYDDR (138 aa)). The dehydratase (DH) domain stretch occupies residues 984-1281 (HELLGSRTPD…FRNKLFSITA (298 aa)). Residues 984–1306 (HELLGSRTPD…TSTIGRNSPS (323 aa)) enclose the PKS/mFAS DH domain. Catalysis depends on His-1016, which acts as the Proton acceptor; for dehydratase activity. A C-terminal hotdog fold region spans residues 1150–1306 (RIAIDSADIY…TSTIGRNSPS (157 aa)). Asp-1216 serves as the catalytic Proton donor; for dehydratase activity. Positions 1544–1859 (GILKTLHYEQ…DVDVVEKIVI (316 aa)) are enoylreductase (ER) domain. The ketoreductase (KR) domain stretch occupies residues 1882 to 2104 (PDASYLIAGA…LRFCCDPDRV (223 aa)). The 78-residue stretch at 2174-2251 (QATDIVVEAI…LLAVKVAGKS (78 aa)) folds into the Carrier domain. Position 2211 is an O-(pantetheine 4'-phosphoryl)serine (Ser-2211).

It depends on pantetheine 4'-phosphate as a cofactor.

In terms of biological role, reducing polyketide synthase that catalyzes the formation of a C22 intermediate attached to the ACP. Release by intramolecular hydrolysis by the enolized delta-carbonyl would give the pyrone product aslanipyrone. Alternatively, KR-mediated reduction of the beta-carbonyl of the C22 intermediate would form a beta-hydroxy thioester intermediate, which could be a substrate for a further KS-mediated condensation of an additional C2 unit to form a C24 intermediate, which cyclizes by aldol condensation followed by decarboxylation to form aslaniol. Neither aslanipyrone, aslaniol, nor their derivatives have been detected in A.solani, probably due to a low abundance and/or extensive post-PKS modification. It is assumed that the branching point from C22 to C24 is the result of KR activity on the C22 intermediate anchored to the ACP. This is Reducing polyketide synthase pksF from Alternaria solani.